Consider the following 121-residue polypeptide: MQYLYIFVGGALGALIRFCLSMLNEGSTIPLGTFVANLLGAFLMGSIGALSLSLFKTHPNIKKGLTTGLLGALTTFSTFQFELVTLFNQHHFILFTIYGVTSYILGILSCYLGVKIGGRFS.

The next 4 helical transmembrane spans lie at 3 to 23 (YLYI…LSML), 29 to 49 (IPLG…SIGA), 67 to 87 (TGLL…VTLF), and 92 to 112 (FILF…SCYL). Residues glycine 71 and threonine 74 each coordinate Na(+).

Belongs to the fluoride channel Fluc/FEX (TC 1.A.43) family.

The protein localises to the cell membrane. The catalysed reaction is fluoride(in) = fluoride(out). With respect to regulation, na(+) is not transported, but it plays an essential structural role and its presence is essential for fluoride channel function. Functionally, fluoride-specific ion channel. Important for reducing fluoride concentration in the cell, thus reducing its toxicity. The chain is Fluoride-specific ion channel FluC 1 from Staphylococcus epidermidis (strain ATCC 35984 / DSM 28319 / BCRC 17069 / CCUG 31568 / BM 3577 / RP62A).